A 159-amino-acid polypeptide reads, in one-letter code: Disease resistance response protein Pi176 (159 aa).

The protein belongs to the BetVI family.

This is Disease resistance response protein Pi176 from Pisum sativum (Garden pea).